The sequence spans 301 residues: 3-dehydroquinate dehydratase (301 aa).

Residues 1 to 221 are 3-dehydroquinate dehydratase; sequence MLQYGVLICG…YYAALLALGI (221 aa). Residues 32-34 and R63 contribute to the 3-dehydroquinate site; that span reads ELR. The Proton donor/acceptor role is filled by H119. K145 serves as the catalytic Schiff-base intermediate with substrate. 3-dehydroquinate-binding residues include R183, T202, and Q206. Residues 222 to 301 form the Chorismate mutase domain; that stretch reads TPSGGGLPAL…QMCKAVQLVA (80 aa).

It belongs to the type-I 3-dehydroquinase family. In terms of assembly, homodimer.

The enzyme catalyses 3-dehydroquinate = 3-dehydroshikimate + H2O. It participates in metabolic intermediate biosynthesis; chorismate biosynthesis; chorismate from D-erythrose 4-phosphate and phosphoenolpyruvate: step 3/7. In terms of biological role, involved in the third step of the chorismate pathway, which leads to the biosynthesis of aromatic amino acids. Catalyzes the cis-dehydration of 3-dehydroquinate (DHQ) and introduces the first double bond of the aromatic ring to yield 3-dehydroshikimate. In Pyrobaculum aerophilum (strain ATCC 51768 / DSM 7523 / JCM 9630 / CIP 104966 / NBRC 100827 / IM2), this protein is 3-dehydroquinate dehydratase.